The sequence spans 473 residues: Photosystem II CP43 reaction center protein (473 aa).

Positions 1–14 (MKTLYSLRRFYPVE) are excised as a propeptide. Thr15 is modified (N-acetylthreonine). Thr15 is modified (phosphothreonine). The next 5 helical transmembrane spans lie at 69–93 (LFEVAHFVPEKPMYEQGLILLPHLA), 134–155 (LLGPETLEESFPFFGYVWKDRN), 178–200 (KALYFGGVYDTWAPGGGDVRKIT), 255–275 (KPFAWARRAFVWSGEAYLSYS), and 291–312 (WFNNTAYPSEFYGPTGPEASQA). Glu367 is a [CaMn4O5] cluster binding site. A helical transmembrane segment spans residues 447-471 (RARAAAAGFEKGIDRDLEPVLSMTP).

It belongs to the PsbB/PsbC family. PsbC subfamily. In terms of assembly, PSII is composed of 1 copy each of membrane proteins PsbA, PsbB, PsbC, PsbD, PsbE, PsbF, PsbH, PsbI, PsbJ, PsbK, PsbL, PsbM, PsbT, PsbX, PsbY, PsbZ, Psb30/Ycf12, at least 3 peripheral proteins of the oxygen-evolving complex and a large number of cofactors. It forms dimeric complexes. Binds multiple chlorophylls and provides some of the ligands for the Ca-4Mn-5O cluster of the oxygen-evolving complex. It may also provide a ligand for a Cl- that is required for oxygen evolution. PSII binds additional chlorophylls, carotenoids and specific lipids. is required as a cofactor.

It localises to the plastid. The protein resides in the chloroplast thylakoid membrane. Its function is as follows. One of the components of the core complex of photosystem II (PSII). It binds chlorophyll and helps catalyze the primary light-induced photochemical processes of PSII. PSII is a light-driven water:plastoquinone oxidoreductase, using light energy to abstract electrons from H(2)O, generating O(2) and a proton gradient subsequently used for ATP formation. In Dioscorea elephantipes (Elephant's foot yam), this protein is Photosystem II CP43 reaction center protein.